A 240-amino-acid chain; its full sequence is Ribonuclease PH (240 aa).

Phosphate-binding positions include R87 and G125–R127.

It belongs to the RNase PH family. In terms of assembly, homohexameric ring arranged as a trimer of dimers.

The catalysed reaction is tRNA(n+1) + phosphate = tRNA(n) + a ribonucleoside 5'-diphosphate. Phosphorolytic 3'-5' exoribonuclease that plays an important role in tRNA 3'-end maturation. Removes nucleotide residues following the 3'-CCA terminus of tRNAs; can also add nucleotides to the ends of RNA molecules by using nucleoside diphosphates as substrates, but this may not be physiologically important. Probably plays a role in initiation of 16S rRNA degradation (leading to ribosome degradation) during starvation. This is Ribonuclease PH from Crocosphaera subtropica (strain ATCC 51142 / BH68) (Cyanothece sp. (strain ATCC 51142)).